Here is a 438-residue protein sequence, read N- to C-terminus: Transposon Ty2-C Gag polyprotein (438 aa).

3 stretches are compositionally biased toward polar residues: residues M1 to R11, A19 to N39, and K49 to T60. Disordered stretches follow at residues M1–H88, N365–H397, and S419–I438. The segment at E295 to H397 is RNA-binding. Residues T369 to N382 are compositionally biased toward low complexity.

Homotrimer.

Its subcellular location is the cytoplasm. Capsid protein (CA) is the structural component of the virus-like particle (VLP), forming the shell that encapsulates the retrotransposons dimeric RNA genome. The particles are assembled from trimer-clustered units and there are holes in the capsid shells that allow for the diffusion of macromolecules. CA also has nucleocapsid-like chaperone activity, promoting primer tRNA(i)-Met annealing to the multipartite primer-binding site (PBS), dimerization of Ty2 RNA and initiation of reverse transcription. This Saccharomyces cerevisiae (strain ATCC 204508 / S288c) (Baker's yeast) protein is Transposon Ty2-C Gag polyprotein (TY2A-C).